Reading from the N-terminus, the 369-residue chain is Histidinol-phosphate aminotransferase (369 aa).

Lys222 carries the post-translational modification N6-(pyridoxal phosphate)lysine.

This sequence belongs to the class-II pyridoxal-phosphate-dependent aminotransferase family. Histidinol-phosphate aminotransferase subfamily. Homodimer. Pyridoxal 5'-phosphate serves as cofactor.

It catalyses the reaction L-histidinol phosphate + 2-oxoglutarate = 3-(imidazol-4-yl)-2-oxopropyl phosphate + L-glutamate. Its pathway is amino-acid biosynthesis; L-histidine biosynthesis; L-histidine from 5-phospho-alpha-D-ribose 1-diphosphate: step 7/9. In Halalkalibacterium halodurans (strain ATCC BAA-125 / DSM 18197 / FERM 7344 / JCM 9153 / C-125) (Bacillus halodurans), this protein is Histidinol-phosphate aminotransferase.